A 241-amino-acid polypeptide reads, in one-letter code: Chlorophyll a-b binding protein 6, chloroplastic (241 aa).

Residues 1–35 (MASNSLMSCGIAAVYPSLLSSSKSKFVSAGVPLPN) constitute a chloroplast transit peptide. Residue tryptophan 48 coordinates chlorophyll b. Chlorophyll a contacts are provided by phenylalanine 68, glutamate 87, and histidine 90. Position 92 (arginine 92) interacts with chlorophyll b. A helical membrane pass occupies residues 93–113 (WAMLAVPGILVPEALGYGNWV). Leucine 129 contacts chlorophyll a. A helical transmembrane segment spans residues 132–152 (PVPWGTLPTILAIEFLAIAFV). Chlorophyll b-binding residues include valine 133, glutamate 153, and arginine 156. Residues lysine 190, glutamate 191, asparagine 194, arginine 196, glutamine 208, and histidine 224 each contribute to the chlorophyll a site. Residues 197–217 (LALLAFVGFCVQQSAYPGTGP) traverse the membrane as a helical segment.

Belongs to the light-harvesting chlorophyll a/b-binding (LHC) protein family. The LHC complex consists of chlorophyll a-b binding proteins. Red-emitting heterodimer with LHCA4. Interacts with LHCA5. It depends on Binds at least 14 chlorophylls (8 Chl-a and 6 Chl-b) and carotenoids such as lutein and neoxanthin. as a cofactor. Photoregulated by reversible phosphorylation of its threonine residues.

It localises to the plastid. It is found in the chloroplast thylakoid membrane. Functionally, the light-harvesting complex (LHC) functions as a light receptor, it captures and delivers excitation energy to photosystems with which it is closely associated. This Arabidopsis thaliana (Mouse-ear cress) protein is Chlorophyll a-b binding protein 6, chloroplastic.